The sequence spans 195 residues: Putative NADH dehydrogenase/NAD(P)H nitroreductase CC_0061 (195 aa).

The protein belongs to the nitroreductase family. HadB/RutE subfamily. Requires FMN as cofactor.

This is Putative NADH dehydrogenase/NAD(P)H nitroreductase CC_0061 from Caulobacter vibrioides (strain ATCC 19089 / CIP 103742 / CB 15) (Caulobacter crescentus).